A 109-amino-acid polypeptide reads, in one-letter code: Cell division protein ZapA (109 aa).

Residues Lys71–Arg99 adopt a coiled-coil conformation.

This sequence belongs to the ZapA family. Type 1 subfamily. As to quaternary structure, homodimer. Interacts with FtsZ.

It is found in the cytoplasm. Functionally, activator of cell division through the inhibition of FtsZ GTPase activity, therefore promoting FtsZ assembly into bundles of protofilaments necessary for the formation of the division Z ring. It is recruited early at mid-cell but it is not essential for cell division. The sequence is that of Cell division protein ZapA from Serratia proteamaculans (strain 568).